Here is a 1679-residue protein sequence, read N- to C-terminus: Lysophospholipase NTE1 (1679 aa).

Over residues 1-20 (MRSMNCTTNNTNNTGQNTKN) the composition is skewed to low complexity. Positions 1–21 (MRSMNCTTNNTNNTGQNTKNS) are disordered. The Cytoplasmic segment spans residues 1–49 (MRSMNCTTNNTNNTGQNTKNSLGSSFNSSNYTSYRFQTCLTDQIISEAQ). Residues 50–70 (TWSLSSLFNFSWVVSYFVMGA) traverse the membrane as a helical segment. Topologically, residues 71-103 (SRMIFRYGWYLATLSLLRIPKWIFFKLHHVQFT) are lumenal. Residues 104 to 124 (LSFWLILFALAVIVFVTYTIM) traverse the membrane as a helical segment. Over 125–1679 (KERILSQYKR…EFLLHRRNSI (1555 aa)) the chain is Cytoplasmic. Positions 261–274 (SDKDHGDETDHSDT) are enriched in basic and acidic residues. Residues 261–304 (SDKDHGDETDHSDTDGLDDQDRDEEDEEEDDDIDNYDTKSCSSN) form a disordered region. A compositionally biased stretch (acidic residues) spans 275–295 (DGLDDQDRDEEDEEEDDDIDN). Ser300 and Ser312 each carry phosphoserine. 2 disordered regions span residues 498-527 (SSGSADLEPKPKNSNASSKLKKPPKAKPSD) and 586-672 (DILS…VSPR). Composition is skewed to polar residues over residues 592-606 (PIHNNNRNKSNGINT) and 630-652 (FSSLSPELRNAQLSTSPLSLDNT). Phosphoserine occurs at positions 632, 634, 653, 661, 670, 680, and 739. Residues 775 to 800 (KEYTISNKRHNKSKSQDKKKPRAYKE) form a disordered region. Residues 788–800 (KSQDKKKPRAYKE) show a composition bias toward basic and acidic residues. Thr803 is modified (phosphothreonine). A nucleoside 3',5'-cyclic phosphate-binding positions include 803–947 (TPNL…LTKL) and 943–1074 (SLTK…VAKK). The interval 855–882 (SSSVVSSMSKPEQVSAQSSHKGENPHHT) is disordered. The span at 862 to 873 (MSKPEQVSAQSS) shows a compositional bias: polar residues. Residues 1373-1537 (LVLGGGGARG…VDNLPVTEMR (165 aa)) form the PNPLA domain. A GXGXXG motif is present at residues 1377–1382 (GGGARG). Positions 1404–1408 (GTSIG) match the GXSXG motif. Catalysis depends on Ser1406, which acts as the Nucleophile. The active-site Proton acceptor is Asp1524. The short motif at 1524–1526 (DGG) is the DGA/G element.

It belongs to the NTE family.

The protein localises to the endoplasmic reticulum membrane. The protein resides in the lipid droplet. The enzyme catalyses a 1-acyl-sn-glycero-3-phosphocholine + H2O = sn-glycerol 3-phosphocholine + a fatty acid + H(+). The catalysed reaction is a 1,2-diacyl-sn-glycero-3-phosphocholine + 2 H2O = sn-glycerol 3-phosphocholine + 2 a carboxylate + 2 H(+). Positively regulated by SEC14. Inhibited by organophosphorus esters in the order phenyl saligenin phosphate (PSP) &gt; phenyldipentyl phosphinate (PDPP) = diisopropyl fluorophosphate (DFP) &gt; and paraoxon (PXN). In terms of biological role, intracellular phospholipase B that catalyzes the double deacylation of phosphatidylcholine (PC) to glycerophosphocholine (GroPCho). Plays an important role in membrane lipid homeostasis. Responsible for the rapid PC turnover in response to inositol, elevated temperatures, or when choline is present in the growth medium. NTE1 activity impacts the repressing transcriptional activity of OPI1, the main regulator of phospholipid synthesis gene transcription. In Saccharomyces cerevisiae (strain ATCC 204508 / S288c) (Baker's yeast), this protein is Lysophospholipase NTE1 (NTE1).